Consider the following 474-residue polypeptide: Aspartyl protease family protein At5g10770 (474 aa).

The N-terminal stretch at 1–25 (MSINRNLLNIIIILCICLNLGCNDG) is a signal peptide. Positions 132-469 (YIVTVGLGTP…DGAGGRVGFA (338 aa)) constitute a Peptidase A1 domain. Active-site residues include Asp150 and Asp352. A disulfide bond links Cys391 and Cys432. The GPI-anchor amidated asparagine moiety is linked to residue Asn443. A propeptide spans 444 to 474 (AAIFGNVQQQTLEVVYDGAGGRVGFAPNGCS) (removed in mature form).

The protein belongs to the peptidase A1 family.

The protein resides in the cell membrane. Probably not redundant with AED1 and not involved in restriction of salicylic acid (SA) or systemic acquired resistance (SAR) signaling. The protein is Aspartyl protease family protein At5g10770 of Arabidopsis thaliana (Mouse-ear cress).